Consider the following 263-residue polypeptide: Interleukin-22 receptor subunit alpha-2 (263 aa).

The signal sequence occupies residues methionine 1 to glycine 21. 3 consecutive Fibronectin type-III domains span residues histidine 26–phenylalanine 68, glycine 100–aspartate 161, and proline 162–proline 263. Asparagine 56 is a glycosylation site (N-linked (GlcNAc...) asparagine). Cysteine 110 and cysteine 118 form a disulfide bridge. N-linked (GlcNAc...) asparagine glycosylation is found at asparagine 166, asparagine 171, asparagine 192, and asparagine 209. The cysteines at positions 238 and 259 are disulfide-linked.

The protein belongs to the type II cytokine receptor family. Expressed in placenta, spleen, breast, skin and lung. Also detected in intestinal tract, testis, brain, heart and thymus. No expression found in prostate, bladder, kidney, ovary, muscle, bone marrow, liver and uterus. Isoform 1 is expressed only in placenta. Isoform 2 is expressed in placenta and breast and at lower level in spleen, skin, thymus and stomach.

The protein resides in the secreted. In terms of biological role, isoform 2 is a receptor for IL22. Binds to IL22, prevents interaction with the functional IL-22R complex and blocks the activity of IL22 (in vitro). May play an important role as an IL22 antagonist in the regulation of inflammatory responses. Functionally, isoform 1 may play a role in establishing and maintaining successful pregnancy. In Homo sapiens (Human), this protein is Interleukin-22 receptor subunit alpha-2 (IL22RA2).